The chain runs to 1100 residues: Exportin-T (1100 aa).

It belongs to the exportin family. As to quaternary structure, interacts with CEX1, GSP1, GSP2, NSP1, NUP2 and UTP8.

The protein resides in the nucleus. It is found in the cytoplasm. In terms of biological role, tRNA nucleus export receptor which facilitates tRNA translocation across the nuclear pore complex. Preferentially interacts with tRNAs with mature 5'- and 3'-termini and does not distinguish between intron-containing and spliced tRNAs. In the nucleus binds to tRNA and to the Ran-GTPases GSP1 or GSP2 in their active GTP-bound form. Docking of this trimeric complex to the nuclear pore complex (NPC) is mediated through binding to nucleoporins. Upon transit of a nuclear export complex into the cytoplasm, disassembling of the complex and hydrolysis of Ran-GTP to Ran-GDP cause release of the tRNA from the export receptor. The directionality of nuclear export is thought to be conferred by an asymmetric distribution of the GTP- and GDP-bound forms of Ran between the cytoplasm and nucleus. The chain is Exportin-T (LOS1) from Saccharomyces cerevisiae (strain ATCC 204508 / S288c) (Baker's yeast).